We begin with the raw amino-acid sequence, 86 residues long: Apolipoprotein C-I (86 aa).

An N-terminal signal peptide occupies residues 1–26 (MRLFLSLPVLVVALLMILEGPGPAQG).

It belongs to the apolipoprotein C1 family.

It is found in the secreted. In terms of biological role, inhibitor of lipoprotein binding to the low density lipoprotein (LDL) receptor, LDL receptor-related protein, and very low density lipoprotein (VLDL) receptor. Associates with high density lipoproteins (HDL) and the triacylglycerol-rich lipoproteins in the plasma and makes up about 10% of the protein of the VLDL and 2% of that of HDL. Appears to interfere directly with fatty acid uptake and is also the major plasma inhibitor of cholesteryl ester transfer protein (CETP). Binds free fatty acids and reduces their intracellular esterification. Modulates the interaction of APOE with beta-migrating VLDL and inhibits binding of beta-VLDL to the LDL receptor-related protein. This chain is Apolipoprotein C-I (APOC1), found in Aotus nancymaae (Ma's night monkey).